Consider the following 117-residue polypeptide: Cysteine rich necrotrophic effector Tox1 (117 aa).

The signal sequence occupies residues 1–17 (MKLTMVLSVAFATLTFA). Intrachain disulfides connect Cys36–Cys87, Cys44–Cys55, Cys53–Cys58, Cys54–Cys98, Cys63–Cys83, Cys67–Cys117, Cys86–Cys97, and Cys107–Cys110. The tract at residues 87 to 117 (CNAGGESHELCCSIASAGIDCNPCTAGLRMC) is chitin-binding domain.

In terms of assembly, interacts with host cell wall-associated kinase receptor Snn1.

Its subcellular location is the secreted. Necrotrophic effector that plays a critical role during fungal penetration, via its interaction with the host Snn1 protein. Snn1 is a member of the wall-associated kinase class of receptors, which are known to drive pathways for biotrophic pathogen resistance. Recognition of Tox1 by Snn1 induces mitogen-activated protein kinase genes such as MAPK3 and activates programmed cell death, which allows this necrotroph to gain nutrients and sporulate. Recognition of Tox1 by Snn1 also induces other plant defense responses, including oxidative burst and pathogenesis related (PR) gene expression. The development of necrosis and disease induced by Tox1, and particularly penetration during infection, requires light, which is probably related to the light-dependent expression of host Snn1. Tox1 plays an additional role in providing significant protection from wheat chitinases by binding chitin in the fungal cell wall. The sequence is that of Cysteine rich necrotrophic effector Tox1 from Phaeosphaeria nodorum (strain SN15 / ATCC MYA-4574 / FGSC 10173) (Glume blotch fungus).